The following is an 804-amino-acid chain: Enhancer of polycomb homolog 2 (804 aa).

Disordered stretches follow at residues 372–398, 484–507, 602–623, and 642–669; these read QSSD…PDGS, GFSS…SDRH, QQSQ…KSDC, and NSPT…VQPS. Residues 602 to 611 are compositionally biased toward low complexity; sequence QQSQQSLQQS. Polar residues predominate over residues 654–669; sequence DQNAGHSNLNGVVQPS.

It belongs to the enhancer of polycomb family.

The protein resides in the nucleus. In terms of biological role, may play a role in transcription or DNA repair. This chain is Enhancer of polycomb homolog 2 (epc2), found in Xenopus tropicalis (Western clawed frog).